The primary structure comprises 390 residues: Carbamoyl phosphate synthase small chain (390 aa).

The CPSase stretch occupies residues 1–198 (MTSTPTPTPT…LGEGYAVGPE (198 aa)). 3 residues coordinate L-glutamine: Ser53, Gly250, and Gly252. One can recognise a Glutamine amidotransferase type-1 domain in the interval 202–390 (RVVVLDYGVK…VGELKGRVEA (189 aa)). Residue Cys279 is the Nucleophile of the active site. L-glutamine is bound by residues Leu280, Gln283, Asn321, Gly323, and Phe324. Catalysis depends on residues His363 and Glu365.

The protein belongs to the CarA family. Composed of two chains; the small (or glutamine) chain promotes the hydrolysis of glutamine to ammonia, which is used by the large (or ammonia) chain to synthesize carbamoyl phosphate. Tetramer of heterodimers (alpha,beta)4.

It carries out the reaction hydrogencarbonate + L-glutamine + 2 ATP + H2O = carbamoyl phosphate + L-glutamate + 2 ADP + phosphate + 2 H(+). The enzyme catalyses L-glutamine + H2O = L-glutamate + NH4(+). Its pathway is amino-acid biosynthesis; L-arginine biosynthesis; carbamoyl phosphate from bicarbonate: step 1/1. The protein operates within pyrimidine metabolism; UMP biosynthesis via de novo pathway; (S)-dihydroorotate from bicarbonate: step 1/3. Small subunit of the glutamine-dependent carbamoyl phosphate synthetase (CPSase). CPSase catalyzes the formation of carbamoyl phosphate from the ammonia moiety of glutamine, carbonate, and phosphate donated by ATP, constituting the first step of 2 biosynthetic pathways, one leading to arginine and/or urea and the other to pyrimidine nucleotides. The small subunit (glutamine amidotransferase) binds and cleaves glutamine to supply the large subunit with the substrate ammonia. The protein is Carbamoyl phosphate synthase small chain of Maricaulis maris (strain MCS10) (Caulobacter maris).